A 228-amino-acid chain; its full sequence is Putative N-acetylmannosamine-6-phosphate 2-epimerase (228 aa).

This sequence belongs to the NanE family.

The enzyme catalyses an N-acyl-D-glucosamine 6-phosphate = an N-acyl-D-mannosamine 6-phosphate. The protein operates within amino-sugar metabolism; N-acetylneuraminate degradation; D-fructose 6-phosphate from N-acetylneuraminate: step 3/5. Its function is as follows. Converts N-acetylmannosamine-6-phosphate (ManNAc-6-P) to N-acetylglucosamine-6-phosphate (GlcNAc-6-P). This is Putative N-acetylmannosamine-6-phosphate 2-epimerase from Pasteurella multocida (strain Pm70).